The following is a 93-amino-acid chain: Large ribosomal subunit protein uL23 (93 aa).

Belongs to the universal ribosomal protein uL23 family. In terms of assembly, part of the 50S ribosomal subunit. Contacts protein L29, and trigger factor when it is bound to the ribosome.

Its function is as follows. One of the early assembly proteins it binds 23S rRNA. One of the proteins that surrounds the polypeptide exit tunnel on the outside of the ribosome. Forms the main docking site for trigger factor binding to the ribosome. In Campylobacter jejuni subsp. jejuni serotype O:2 (strain ATCC 700819 / NCTC 11168), this protein is Large ribosomal subunit protein uL23.